Reading from the N-terminus, the 303-residue chain is Foldase protein PrsA (303 aa).

Positions 1–20 (MMKKWLLAAASLLMVVTLAG) are cleaved as a signal peptide. The N-palmitoyl cysteine moiety is linked to residue cysteine 21. A lipid anchor (S-diacylglycerol cysteine) is attached at cysteine 21. One can recognise a PpiC domain in the interval 137–233 (EPKVEVQHIL…YGYHVIRMIK (97 aa)).

The protein belongs to the PrsA family.

It is found in the cell membrane. The catalysed reaction is [protein]-peptidylproline (omega=180) = [protein]-peptidylproline (omega=0). Its function is as follows. Plays a major role in protein secretion by helping the post-translocational extracellular folding of several secreted proteins. The polypeptide is Foldase protein PrsA (Latilactobacillus sakei subsp. sakei (strain 23K) (Lactobacillus sakei subsp. sakei)).